The primary structure comprises 957 residues: Ribonuclease 3-like protein 3 (957 aa).

The region spanning 4 to 142 is the RNase III 1 domain; it reads VEAVEKILNY…IAATVFIDVN (139 aa). Residues 307-382 enclose the DRBM 1 domain; the sequence is NGRGELIEIC…AYHMIRALES (76 aa). In terms of domain architecture, RNase III 2 spans 415-551; that stretch reads VEAVEKILNY…VAGAVYIDVK (137 aa). 2 DRBM domains span residues 566-645 and 837-912; these read EPIY…KLSE and DEKG…ALES.

Ribonuclease that cleaves double-stranded RNA (dsRNA). This chain is Ribonuclease 3-like protein 3 (RTL3), found in Arabidopsis thaliana (Mouse-ear cress).